Consider the following 246-residue polypeptide: 4-aminobenzoate synthase (246 aa).

6 residues coordinate Fe(2+): Glu-88, His-95, Glu-149, His-181, Asp-185, and His-188.

The protein belongs to the CADD family. In terms of assembly, homodimer. It depends on Fe(2+) as a cofactor. Mn(2+) serves as cofactor.

Involved in de novo para-aminobenzoate (PABA) biosynthesis. Acts as a self-sacrificing or 'suicide' enzyme that utilizes its own active site tyrosine residue(s) as the substrate for PABA synthesis. The side chain of the tyrosine residue is released from the protein backbone via cleavage of the C(alpha)-C(beta) bond, leaving a glycine in place of the original tyrosine residue. Reaction requires O(2) and a reduced dimetal cofactor. In Nitrosomonas europaea (strain ATCC 19718 / CIP 103999 / KCTC 2705 / NBRC 14298), this protein is 4-aminobenzoate synthase.